The sequence spans 213 residues: Phosphate-specific transport system accessory protein PhoU homolog 2 (213 aa).

The protein belongs to the PhoU family. In terms of assembly, homodimer.

It localises to the cytoplasm. Plays a role in the regulation of phosphate uptake. In this role, it may bind, possibly as a chaperone, to PhoR, PhoP or a PhoR-PhoP complex to promote dephosphorylation of phospho-PhoP, or inhibit formation of the PhoR-PhoP transitory complex. The chain is Phosphate-specific transport system accessory protein PhoU homolog 2 (phoU2) from Mycobacterium bovis (strain ATCC BAA-935 / AF2122/97).